The sequence spans 1125 residues: Exportin-6 (1125 aa).

Ala-2 carries the post-translational modification N-acetylalanine. An Importin N-terminal domain is found at 31–97 (IEELLNNFAQ…RSCLPKLLLA (67 aa)). Position 199 is a phosphoserine (Ser-199). Phosphothreonine is present on residues Thr-201 and Thr-204. Ser-208 and Ser-224 each carry phosphoserine.

The protein belongs to the exportin family. In terms of assembly, found in a complex with XPO6, Ran, ACTB and PFN1. Interacts with ACTB. Interacts with ACTB in a RanGTP-dependent manner.

Its subcellular location is the nucleus. The protein resides in the cytoplasm. Mediates the nuclear export of actin and profilin-actin complexes in somatic cells. The polypeptide is Exportin-6 (XPO6) (Homo sapiens (Human)).